A 309-amino-acid polypeptide reads, in one-letter code: tRNA pseudouridine synthase B (309 aa).

Asp40 (nucleophile) is an active-site residue.

This sequence belongs to the pseudouridine synthase TruB family. Type 1 subfamily.

The enzyme catalyses uridine(55) in tRNA = pseudouridine(55) in tRNA. In terms of biological role, responsible for synthesis of pseudouridine from uracil-55 in the psi GC loop of transfer RNAs. This Mycobacterium avium (strain 104) protein is tRNA pseudouridine synthase B.